The following is a 464-amino-acid chain: Endo-1,4-beta-xylanase A (464 aa).

A signal peptide spans 1-33 (MFRHHPTRGRRTAGLLAAALATLSAGLTAVAPA). One can recognise a GH10 domain in the interval 40–349 (TATLGELAEA…KPAYHAIAAA (310 aa)). The Proton donor role is filled by Glu-166. The Nucleophile role is filled by Glu-271. In terms of domain architecture, CBM2 spans 354 to 457 (SPAPGGNCTA…TPADVTCTPG (104 aa)).

This sequence belongs to the glycosyl hydrolase 10 (cellulase F) family. It depends on Does not require any standard metal (Mg(2+), Mn2(+), Ca(2+)). as a cofactor.

The catalysed reaction is Endohydrolysis of (1-&gt;4)-beta-D-xylosidic linkages in xylans.. It participates in glycan degradation; xylan degradation. With respect to regulation, completely inhibited by Hg(2+), unaffected by EDTA. Its function is as follows. Contributes to hydrolysis of hemicellulose, the major component of plant cell-walls. Hydrolyzes xylan to xylose and xylobiose. The chain is Endo-1,4-beta-xylanase A (xynAS9) from Streptomyces sp.